Consider the following 591-residue polypeptide: Chaperone protein DnaK (591 aa).

Thr-175 carries the phosphothreonine; by autocatalysis modification. Residues 568–577 show a composition bias toward low complexity; the sequence is AQAAEFANKQ. Positions 568-591 are disordered; the sequence is AQAAEFANKQNESDPNNNSSEQNN. Positions 580-591 are enriched in polar residues; it reads SDPNNNSSEQNN.

This sequence belongs to the heat shock protein 70 family.

Functionally, acts as a chaperone. The sequence is that of Chaperone protein DnaK from Mycoplasma mycoides subsp. mycoides SC (strain CCUG 32753 / NCTC 10114 / PG1).